A 365-amino-acid polypeptide reads, in one-letter code: Aminomethyltransferase (365 aa).

This sequence belongs to the GcvT family. The glycine cleavage system is composed of four proteins: P, T, L and H.

It catalyses the reaction N(6)-[(R)-S(8)-aminomethyldihydrolipoyl]-L-lysyl-[protein] + (6S)-5,6,7,8-tetrahydrofolate = N(6)-[(R)-dihydrolipoyl]-L-lysyl-[protein] + (6R)-5,10-methylene-5,6,7,8-tetrahydrofolate + NH4(+). The glycine cleavage system catalyzes the degradation of glycine. This chain is Aminomethyltransferase, found in Chlorobium phaeobacteroides (strain DSM 266 / SMG 266 / 2430).